The following is a 511-amino-acid chain: Probable cytochrome P450 4d21 (511 aa).

Cys-456 is a binding site for heme.

The protein belongs to the cytochrome P450 family. Heme is required as a cofactor.

Its subcellular location is the endoplasmic reticulum membrane. The protein resides in the microsome membrane. In terms of biological role, may be involved in the metabolism of insect hormones and in the breakdown of synthetic insecticides. The protein is Probable cytochrome P450 4d21 (Cyp4d21) of Drosophila melanogaster (Fruit fly).